Here is a 386-residue protein sequence, read N- to C-terminus: Succinate--CoA ligase [ADP-forming] subunit beta (386 aa).

In terms of domain architecture, ATP-grasp spans 9–244 (KAVLRSYGVS…LDEEDAKEIE (236 aa)). ATP-binding positions include Lys46, 53–55 (GRG), Glu99, Cys102, and Glu107. Residues Asn199 and Asp213 each coordinate Mg(2+). Residues Asn264 and 321 to 323 (GIM) contribute to the substrate site.

Belongs to the succinate/malate CoA ligase beta subunit family. Heterotetramer of two alpha and two beta subunits. The cofactor is Mg(2+).

The catalysed reaction is succinate + ATP + CoA = succinyl-CoA + ADP + phosphate. The enzyme catalyses GTP + succinate + CoA = succinyl-CoA + GDP + phosphate. It functions in the pathway carbohydrate metabolism; tricarboxylic acid cycle; succinate from succinyl-CoA (ligase route): step 1/1. Functionally, succinyl-CoA synthetase functions in the citric acid cycle (TCA), coupling the hydrolysis of succinyl-CoA to the synthesis of either ATP or GTP and thus represents the only step of substrate-level phosphorylation in the TCA. The beta subunit provides nucleotide specificity of the enzyme and binds the substrate succinate, while the binding sites for coenzyme A and phosphate are found in the alpha subunit. This is Succinate--CoA ligase [ADP-forming] subunit beta from Bacillus thuringiensis (strain Al Hakam).